Consider the following 547-residue polypeptide: Eukaryotic translation initiation factor 3 subunit D (547 aa).

Disordered stretches follow at residues 1-22 (MANF…PSTS) and 114-159 (SVRG…TRDS). Residues 126–148 (GRGGQRGGFSTRGGRGGARGGYG) are compositionally biased toward gly residues. Residues 284–298 (PLDYITVNENAADPP) are RNA gate.

This sequence belongs to the eIF-3 subunit D family. In terms of assembly, component of the eukaryotic translation initiation factor 3 (eIF-3) complex.

It is found in the cytoplasm. MRNA cap-binding component of the eukaryotic translation initiation factor 3 (eIF-3) complex, which is involved in protein synthesis of a specialized repertoire of mRNAs and, together with other initiation factors, stimulates binding of mRNA and methionyl-tRNAi to the 40S ribosome. The eIF-3 complex specifically targets and initiates translation of a subset of mRNAs involved in cell proliferation. In the eIF-3 complex, eif3d specifically recognizes and binds the 7-methylguanosine cap of a subset of mRNAs. The sequence is that of Eukaryotic translation initiation factor 3 subunit D from Cryptococcus neoformans var. neoformans serotype D (strain B-3501A) (Filobasidiella neoformans).